The sequence spans 414 residues: 2,3-bisphosphoglycerate-independent phosphoglycerate mutase (414 aa).

The protein belongs to the BPG-independent phosphoglycerate mutase family. A-PGAM subfamily.

The catalysed reaction is (2R)-2-phosphoglycerate = (2R)-3-phosphoglycerate. The protein operates within carbohydrate degradation; glycolysis; pyruvate from D-glyceraldehyde 3-phosphate: step 3/5. Its function is as follows. Catalyzes the interconversion of 2-phosphoglycerate and 3-phosphoglycerate. The polypeptide is 2,3-bisphosphoglycerate-independent phosphoglycerate mutase (Saccharolobus solfataricus (strain ATCC 35092 / DSM 1617 / JCM 11322 / P2) (Sulfolobus solfataricus)).